The sequence spans 252 residues: tRNA (guanine-N(1)-)-methyltransferase (252 aa).

Residues Gly-117 and 137–142 contribute to the S-adenosyl-L-methionine site; that span reads IGDYVL.

It belongs to the RNA methyltransferase TrmD family. In terms of assembly, homodimer.

Its subcellular location is the cytoplasm. It catalyses the reaction guanosine(37) in tRNA + S-adenosyl-L-methionine = N(1)-methylguanosine(37) in tRNA + S-adenosyl-L-homocysteine + H(+). Its function is as follows. Specifically methylates guanosine-37 in various tRNAs. The protein is tRNA (guanine-N(1)-)-methyltransferase of Idiomarina loihiensis (strain ATCC BAA-735 / DSM 15497 / L2-TR).